A 112-amino-acid polypeptide reads, in one-letter code: T cell receptor alpha variable 13-1 (112 aa).

An N-terminal signal peptide occupies residues 1–20; the sequence is MTSIRAVFIFLWLQLDLVNG. The region spanning 21-112 is the Ig-like domain; it reads ENVEQHPSTL…DSAVYFCAAS (92 aa). A disulfide bridge links Cys-42 with Cys-109. N-linked (GlcNAc...) asparagine glycosylation is present at Asn-86.

In terms of assembly, alpha-beta TR is a heterodimer composed of an alpha and beta chain; disulfide-linked. The alpha-beta TR is associated with the transmembrane signaling CD3 coreceptor proteins to form the TR-CD3 (TcR or TCR). The assembly of alpha-beta TR heterodimers with CD3 occurs in the endoplasmic reticulum where a single alpha-beta TR heterodimer associates with one CD3D-CD3E heterodimer, one CD3G-CD3E heterodimer and one CD247 homodimer forming a stable octameric structure. CD3D-CD3E and CD3G-CD3E heterodimers preferentially associate with TR alpha and TR beta chains, respectively. The association of the CD247 homodimer is the last step of TcR assembly in the endoplasmic reticulum and is required for transport to the cell surface.

The protein resides in the cell membrane. Functionally, v region of the variable domain of T cell receptor (TR) alpha chain that participates in the antigen recognition. Alpha-beta T cell receptors are antigen specific receptors which are essential to the immune response and are present on the cell surface of T lymphocytes. Recognize peptide-major histocompatibility (MH) (pMH) complexes that are displayed by antigen presenting cells (APC), a prerequisite for efficient T cell adaptive immunity against pathogens. Binding of alpha-beta TR to pMH complex initiates TR-CD3 clustering on the cell surface and intracellular activation of LCK that phosphorylates the ITAM motifs of CD3G, CD3D, CD3E and CD247 enabling the recruitment of ZAP70. In turn ZAP70 phosphorylates LAT, which recruits numerous signaling molecules to form the LAT signalosome. The LAT signalosome propagates signal branching to three major signaling pathways, the calcium, the mitogen-activated protein kinase (MAPK) kinase and the nuclear factor NF-kappa-B (NF-kB) pathways, leading to the mobilization of transcription factors that are critical for gene expression and essential for T cell growth and differentiation. The T cell repertoire is generated in the thymus, by V-(D)-J rearrangement. This repertoire is then shaped by intrathymic selection events to generate a peripheral T cell pool of self-MH restricted, non-autoaggressive T cells. Post-thymic interaction of alpha-beta TR with the pMH complexes shapes TR structural and functional avidity. The chain is T cell receptor alpha variable 13-1 from Homo sapiens (Human).